Consider the following 275-residue polypeptide: Small ribosomal subunit protein uS3 (275 aa).

The KH type-2 domain maps to 38 to 106; it reads IRRLLSSGLE…QVQLNILEVK (69 aa). Positions 217–275 are disordered; sequence AVPAGADRPRRERPAGSRPRRSGASGTTATGTEAGRAVGSEEPAAAESATTPEAQSTES. The segment covering 238 to 275 has biased composition (low complexity); sequence SGASGTTATGTEAGRAVGSEEPAAAESATTPEAQSTES.

Belongs to the universal ribosomal protein uS3 family. In terms of assembly, part of the 30S ribosomal subunit. Forms a tight complex with proteins S10 and S14.

In terms of biological role, binds the lower part of the 30S subunit head. Binds mRNA in the 70S ribosome, positioning it for translation. The sequence is that of Small ribosomal subunit protein uS3 from Mycobacterium marinum (strain ATCC BAA-535 / M).